The primary structure comprises 162 residues: Putative ankyrin repeat protein RBE_0151 (162 aa).

ANK repeat units follow at residues 49 to 77 (EKWT…NINI), 81 to 110 (KGRT…VVAP), and 114 to 145 (YGWS…EHDK).

This Rickettsia bellii (strain RML369-C) protein is Putative ankyrin repeat protein RBE_0151.